Here is a 395-residue protein sequence, read N- to C-terminus: Argininosuccinate synthase (395 aa).

ATP is bound by residues 6–14 (AYSGGLDTS) and Ala-33. Position 84 (Tyr-84) interacts with L-citrulline. Gly-114 contacts ATP. Thr-116, Asn-120, and Asp-121 together coordinate L-aspartate. Asn-120 lines the L-citrulline pocket. Arg-124, Ser-173, Ser-182, Glu-258, and Tyr-270 together coordinate L-citrulline.

The protein belongs to the argininosuccinate synthase family. Type 1 subfamily. In terms of assembly, homotetramer.

The protein resides in the cytoplasm. The catalysed reaction is L-citrulline + L-aspartate + ATP = 2-(N(omega)-L-arginino)succinate + AMP + diphosphate + H(+). It functions in the pathway amino-acid biosynthesis; L-arginine biosynthesis; L-arginine from L-ornithine and carbamoyl phosphate: step 2/3. The polypeptide is Argininosuccinate synthase (Rhodococcoides fascians (Rhodococcus fascians)).